The chain runs to 208 residues: dITP/XTP pyrophosphatase (208 aa).

A substrate-binding site is contributed by 15-20 (SHNAGK). 2 residues coordinate Mg(2+): glutamate 47 and aspartate 76. Residue aspartate 76 is the Proton acceptor of the active site. Substrate is bound by residues serine 77, 157-160 (HGYD), lysine 180, and 185-186 (HR).

The protein belongs to the HAM1 NTPase family. Homodimer. Mg(2+) is required as a cofactor.

The enzyme catalyses XTP + H2O = XMP + diphosphate + H(+). The catalysed reaction is dITP + H2O = dIMP + diphosphate + H(+). It carries out the reaction ITP + H2O = IMP + diphosphate + H(+). Pyrophosphatase that catalyzes the hydrolysis of nucleoside triphosphates to their monophosphate derivatives, with a high preference for the non-canonical purine nucleotides XTP (xanthosine triphosphate), dITP (deoxyinosine triphosphate) and ITP. Seems to function as a house-cleaning enzyme that removes non-canonical purine nucleotides from the nucleotide pool, thus preventing their incorporation into DNA/RNA and avoiding chromosomal lesions. The sequence is that of dITP/XTP pyrophosphatase from Gluconobacter oxydans (strain 621H) (Gluconobacter suboxydans).